A 201-amino-acid chain; its full sequence is tRNA (guanine-N(7)-)-methyltransferase (201 aa).

4 residues coordinate S-adenosyl-L-methionine: E33, E58, D85, and D106. Residue D106 is part of the active site. Residues K110, D142, and 180–183 (TTYE) each bind substrate.

This sequence belongs to the class I-like SAM-binding methyltransferase superfamily. TrmB family.

The enzyme catalyses guanosine(46) in tRNA + S-adenosyl-L-methionine = N(7)-methylguanosine(46) in tRNA + S-adenosyl-L-homocysteine. The protein operates within tRNA modification; N(7)-methylguanine-tRNA biosynthesis. Catalyzes the formation of N(7)-methylguanine at position 46 (m7G46) in tRNA. In Mesomycoplasma hyopneumoniae (strain J / ATCC 25934 / NCTC 10110) (Mycoplasma hyopneumoniae), this protein is tRNA (guanine-N(7)-)-methyltransferase.